The following is a 231-amino-acid chain: Flagellar L-ring protein (231 aa).

The first 18 residues, 1 to 18, serve as a signal peptide directing secretion; the sequence is MNRFICVLALSGSAVLAG. Cys-19 carries the N-palmitoyl cysteine lipid modification. The S-diacylglycerol cysteine moiety is linked to residue Cys-19.

Belongs to the FlgH family. In terms of assembly, the basal body constitutes a major portion of the flagellar organelle and consists of four rings (L,P,S, and M) mounted on a central rod.

The protein resides in the cell outer membrane. It is found in the bacterial flagellum basal body. In terms of biological role, assembles around the rod to form the L-ring and probably protects the motor/basal body from shearing forces during rotation. The chain is Flagellar L-ring protein from Pseudomonas fluorescens (strain ATCC BAA-477 / NRRL B-23932 / Pf-5).